A 217-amino-acid chain; its full sequence is ATP phosphoribosyltransferase (217 aa).

Belongs to the ATP phosphoribosyltransferase family. Short subfamily. Heteromultimer composed of HisG and HisZ subunits.

The protein resides in the cytoplasm. It catalyses the reaction 1-(5-phospho-beta-D-ribosyl)-ATP + diphosphate = 5-phospho-alpha-D-ribose 1-diphosphate + ATP. Its pathway is amino-acid biosynthesis; L-histidine biosynthesis; L-histidine from 5-phospho-alpha-D-ribose 1-diphosphate: step 1/9. In terms of biological role, catalyzes the condensation of ATP and 5-phosphoribose 1-diphosphate to form N'-(5'-phosphoribosyl)-ATP (PR-ATP). Has a crucial role in the pathway because the rate of histidine biosynthesis seems to be controlled primarily by regulation of HisG enzymatic activity. The polypeptide is ATP phosphoribosyltransferase (Prochlorococcus marinus (strain MIT 9313)).